The following is a 337-amino-acid chain: MTQVFQGRSFLAEKDFSREEFEYLIDFSAHLKDLKKRGVPHHYLEGKNIALLFEKTSTRTRAAFTTAAIDLGAHPEYLGANDIQLGKKESTEDTAKVLGRMFDGIEFRGFSQRMVEELAEFSGVPVWNGLTDEWHPTQMLADYLTIKENFGKLEGITLVYCGDGRNNVANSLLVAGTLMGVNVHIFSPKELFPAEEIVKLAEGYAKESGAHVLVTDNVDEAVKGADVFYTDVWVSMGEEDKFKERVELLQPYQVNMELIKKANNDNLIFLHCLPAFHDTNTVYGKDVAEKFGVKEMEVTDEVFRSKYARHFDQAENRMHTIKAVMAATLGNLFIPKV.

Residues 57 to 60, Gln-84, Arg-108, and 135 to 138 each bind carbamoyl phosphate; these read STRT and HPTQ. L-ornithine is bound by residues Asn-167, Asp-231, and 235 to 236; that span reads SM. Carbamoyl phosphate contacts are provided by residues 272 to 273 and Arg-317; that span reads CL.

The protein belongs to the aspartate/ornithine carbamoyltransferase superfamily. OTCase family.

The protein localises to the cytoplasm. The enzyme catalyses carbamoyl phosphate + L-ornithine = L-citrulline + phosphate + H(+). Its pathway is amino-acid degradation; L-arginine degradation via ADI pathway; carbamoyl phosphate from L-arginine: step 2/2. Reversibly catalyzes the transfer of the carbamoyl group from carbamoyl phosphate (CP) to the N(epsilon) atom of ornithine (ORN) to produce L-citrulline. The protein is Ornithine carbamoyltransferase, catabolic (arcB) of Streptococcus agalactiae.